A 136-amino-acid chain; its full sequence is NADPH-dependent 7-cyano-7-deazaguanine reductase (136 aa).

The Thioimide intermediate role is filled by Cys53. Catalysis depends on Asp60, which acts as the Proton donor. Residues 75 to 77 and 94 to 95 each bind substrate; these read VEL and HE.

Belongs to the GTP cyclohydrolase I family. QueF type 1 subfamily.

Its subcellular location is the cytoplasm. It catalyses the reaction 7-aminomethyl-7-carbaguanine + 2 NADP(+) = 7-cyano-7-deazaguanine + 2 NADPH + 3 H(+). It functions in the pathway tRNA modification; tRNA-queuosine biosynthesis. In terms of biological role, catalyzes the NADPH-dependent reduction of 7-cyano-7-deazaguanine (preQ0) to 7-aminomethyl-7-deazaguanine (preQ1). The sequence is that of NADPH-dependent 7-cyano-7-deazaguanine reductase from Nostoc sp. (strain PCC 7120 / SAG 25.82 / UTEX 2576).